Here is a 310-residue protein sequence, read N- to C-terminus: N-acetyl-gamma-glutamyl-phosphate reductase (310 aa).

Residue cysteine 117 is part of the active site.

Belongs to the NAGSA dehydrogenase family. Type 2 subfamily.

It localises to the cytoplasm. The enzyme catalyses N-acetyl-L-glutamate 5-semialdehyde + phosphate + NADP(+) = N-acetyl-L-glutamyl 5-phosphate + NADPH + H(+). It participates in amino-acid biosynthesis; L-arginine biosynthesis; N(2)-acetyl-L-ornithine from L-glutamate: step 3/4. Catalyzes the NADPH-dependent reduction of N-acetyl-5-glutamyl phosphate to yield N-acetyl-L-glutamate 5-semialdehyde. In Rhizobium rhizogenes (strain K84 / ATCC BAA-868) (Agrobacterium radiobacter), this protein is N-acetyl-gamma-glutamyl-phosphate reductase.